Reading from the N-terminus, the 194-residue chain is ATP synthase subunit 5, mitochondrial (194 aa).

As to quaternary structure, F-type ATP synthases have 2 components, the catalytic core F(1) and the membrane-embedded component F(0), linked together by a central stalk and a peripheral stalk. The central stalk, also called rotor shaft, is often seen as part of F(1). The peripheral stalk is seen as part of F(0). F(0) contains the membrane channel next to the rotor. F-type ATP synthases form dimers but each monomer functions independently in ATP generation. The dimer consists of 18 different polypeptides: ATP1 (subunit alpha, part of F(1), 3 molecules per monomer), ATP2 (subunit beta, part of F(1), 3 molecules per monomer), ATP3 (subunit gamma, part of the central stalk), ATP4 (subunit b, part of the peripheral stalk), ATP5/OSCP (subunit 5/OSCP, part of the peripheral stalk), ATP6 (subunit a, part of the peripheral stalk), ATP7 (subunit d, part of the peripheral stalk), ATP8 (subunit 8, part of the peripheral stalk), OLI1 (subunit c, part of the rotor, 10 molecules per monomer), ATP14 (subunit h, part of the peripheral stalk), ATP15 (subunit epsilon, part of the central stalk), ATP16 (subunit delta, part of the central stalk), ATP17 (subunit f, part of the peripheral stalk), ATP18 (subunit i/j, part of the peripheral stalk). Dimer-specific subunits are ATP19 (subunit k, at interface between monomers), ATP20 (subunit g, at interface between monomers), TIM11 (subunit e, at interface between monomers). Also contains subunit L.

It is found in the mitochondrion inner membrane. In terms of biological role, mitochondrial membrane ATP synthase (F(1)F(0) ATP synthase or Complex V) produces ATP from ADP in the presence of a proton gradient across the membrane which is generated by electron transport complexes of the respiratory chain. F-type ATP synthases consist of two structural domains, F(1) - containing the extramembraneous catalytic core, and F(0) - containing the membrane proton channel, linked together by a central stalk and a peripheral stalk. During catalysis, ATP synthesis in the catalytic domain of F(1) is coupled via a rotary mechanism of the central stalk subunits to proton translocation. Part of the complex F(0) domain and the peripheral stalk, which acts as a stator to hold the catalytic alpha/ATP1(3)beta/ATP2(3) subcomplex and subunit a/ATP6 static relative to the rotary elements. In Pichia angusta (Yeast), this protein is ATP synthase subunit 5, mitochondrial.